Reading from the N-terminus, the 417-residue chain is MSNVKKIKGFADLFSPESDVFTFMENTARDVFSSYGYGELRTPILERTELFCRSIGTETDVVQKEMYTFPDRKNRSLTMRPEATAGVMRAYIEGSLHSQEQVSKLFTFGPMFRYERPQKGRMRQFHQINCECLGPQEPYADAEIILMLLMFLKRIGLSGLELQINSLGCRECRPQYHAALRAFLASLDTAELCEDCRRRMETNPLRVLDCKVPRCKELTADAPVILDHTCDACSEHHSVVLGMLERAGVVYTANPRLVRGLDYYNRTTFEVVCGEIGAQSSVAGGGRYDGLVSQLGGPDVPGIGFACGMERLALALEQKAQREVPRPDFLVAVLEQDGLERGMMLAEALRESGLKGEVSFAARSMKSQMRQAGKRNVRKVLLLGGSEIADGTVTVKDMDTGGQTTISLDAAPGAVAD.

Belongs to the class-II aminoacyl-tRNA synthetase family. In terms of assembly, homodimer.

It localises to the cytoplasm. The enzyme catalyses tRNA(His) + L-histidine + ATP = L-histidyl-tRNA(His) + AMP + diphosphate + H(+). The protein is Histidine--tRNA ligase of Oleidesulfovibrio alaskensis (strain ATCC BAA-1058 / DSM 17464 / G20) (Desulfovibrio alaskensis).